The chain runs to 207 residues: MSTAQPAGADAVRDDLRVLFVDNFDSFTYNLVEYVSEHAETEVVRNTASLDDVEAFDPDAIILSPGPGHPKNERDVGVTLDVLREVSPDVPTLGVCLGLESAVYAYGGTIGRAPEPIHGKAFPIDHDGKGVFAGLEQGFQGGRYHSLIADDVPEEFVVSATTETEDGTELVMGVRHREHPIEAVQFHPESVLTAVGHDVIRNFLAGL.

In terms of domain architecture, Glutamine amidotransferase type-1 spans 17-207 (RVLFVDNFDS…DVIRNFLAGL (191 aa)). L-glutamine is bound at residue 66–68 (GPG). Cysteine 96 (nucleophile; for GATase activity) is an active-site residue. Residue 146 to 147 (SL) coordinates L-glutamine. Catalysis depends on residues histidine 187 and glutamate 189.

As to quaternary structure, tetramer of two components I and two components II.

It carries out the reaction chorismate + L-glutamine = anthranilate + pyruvate + L-glutamate + H(+). It functions in the pathway amino-acid biosynthesis; L-tryptophan biosynthesis; L-tryptophan from chorismate: step 1/5. The polypeptide is Anthranilate synthase component II (trpG1) (Haloarcula marismortui (strain ATCC 43049 / DSM 3752 / JCM 8966 / VKM B-1809) (Halobacterium marismortui)).